A 342-amino-acid polypeptide reads, in one-letter code: Transmembrane protein 59-like (342 aa).

A signal peptide spans 1–24; it reads MAAVALMPPPLLLLLLLASPPAAS. The N-linked (GlcNAc...) asparagine glycan is linked to Asn97. Residues 268–290 form a helical membrane-spanning segment; sequence WILACCLFLSVLVMLWLSCSTLV. Residues 340-342 carry the Microbody targeting signal motif; that stretch reads TKL.

It belongs to the TMEM59 family. Expressed preferentially at high level in the brain.

The protein resides in the golgi apparatus membrane. Modulates the O-glycosylation and complex N-glycosylation steps occurring during the Golgi maturation of APP. Inhibits APP transport to the cell surface and further shedding. The protein is Transmembrane protein 59-like (TMEM59L) of Homo sapiens (Human).